The primary structure comprises 324 residues: Gamma-soluble NSF attachment protein (324 aa).

The span at 285–298 (NPTINSTAPQQQYS) shows a compositional bias: polar residues. The segment at 285–324 (NPTINSTAPQQQYSNTTTTTTNNTNNNNPTSQQDDDEDVL) is disordered. Low complexity predominate over residues 299-312 (NTTTTTTNNTNNNN).

The protein belongs to the SNAP family. In terms of assembly, interacts with nsfA and probably SNARE proteins.

The protein localises to the cytoplasmic vesicle membrane. Its function is as follows. May be required for vesicular transport between the endoplasmic reticulum and the Golgi apparatus. Involved in vesicle fusion with nsfA and probably SNARE proteins. In Dictyostelium discoideum (Social amoeba), this protein is Gamma-soluble NSF attachment protein (snpC).